The sequence spans 139 residues: Large ribosomal subunit protein uL16 (139 aa).

Residues 1 to 21 (MLMPKRVQYRKTQRGRMKGNA) are disordered. Residues 7–17 (VQYRKTQRGRM) are compositionally biased toward basic residues.

It belongs to the universal ribosomal protein uL16 family. In terms of assembly, part of the 50S ribosomal subunit.

Functionally, binds 23S rRNA and is also seen to make contacts with the A and possibly P site tRNAs. The sequence is that of Large ribosomal subunit protein uL16 from Chlorobaculum tepidum (strain ATCC 49652 / DSM 12025 / NBRC 103806 / TLS) (Chlorobium tepidum).